Here is a 326-residue protein sequence, read N- to C-terminus: L-Ala--D-Glu endopeptidase (326 aa).

The first 19 residues, 1-19 (MKVLLSALLLLLFAFEPSA), serve as a signal peptide directing secretion. Zn(2+) contacts are provided by His204, Asp208, His292, and His294.

Belongs to the peptidase M23B family. The cofactor is Zn(2+).

In terms of biological role, L-Ala--D-Glu endopeptidase involved in production of single L-alanine side chains from tetrapeptides in the spore cortex peptidoglycan. Therefore, is required for the endospore cortex maturation. This is L-Ala--D-Glu endopeptidase (lytH) from Bacillus subtilis (strain 168).